Consider the following 404-residue polypeptide: Phosphoglycerate kinase (404 aa).

Substrate-binding positions include 21 to 23, Arg-38, 61 to 64, Arg-126, and Arg-159; these read DFN and HLGR. Residues Lys-210, Glu-333, and 360 to 363 contribute to the ATP site; that span reads GGDS.

The protein belongs to the phosphoglycerate kinase family. In terms of assembly, monomer.

It is found in the cytoplasm. It catalyses the reaction (2R)-3-phosphoglycerate + ATP = (2R)-3-phospho-glyceroyl phosphate + ADP. The protein operates within carbohydrate degradation; glycolysis; pyruvate from D-glyceraldehyde 3-phosphate: step 2/5. The polypeptide is Phosphoglycerate kinase (Acidobacterium capsulatum (strain ATCC 51196 / DSM 11244 / BCRC 80197 / JCM 7670 / NBRC 15755 / NCIMB 13165 / 161)).